The sequence spans 361 residues: Phospho-N-acetylmuramoyl-pentapeptide-transferase (361 aa).

10 helical membrane passes run 25–45 (RGILAALTALFLSLWMGPAVI), 73–93 (TMGGSLILLTVTLSVLLWGDL), 98–118 (VWLVLAVMICFGAIGWYDDWI), 139–159 (IFGLAAGLFLYYTADVPAAIT), 168–188 (IALPLAGVSFVVIAYFWIVGF), 200–220 (GLAIMPTVLVACALGVFAYAS), 237–257 (AGELIIICSAIAGAGLGFLWF), 264–284 (VFMGDIGALSLGAVLGTIAVI), 289–309 (MVLVIMGGVFVIETLSVMIQV), and 339–359 (VIVRFWIISVVLVLIGLATLK).

The protein belongs to the glycosyltransferase 4 family. MraY subfamily. It depends on Mg(2+) as a cofactor.

It is found in the cell inner membrane. It carries out the reaction UDP-N-acetyl-alpha-D-muramoyl-L-alanyl-gamma-D-glutamyl-meso-2,6-diaminopimeloyl-D-alanyl-D-alanine + di-trans,octa-cis-undecaprenyl phosphate = di-trans,octa-cis-undecaprenyl diphospho-N-acetyl-alpha-D-muramoyl-L-alanyl-D-glutamyl-meso-2,6-diaminopimeloyl-D-alanyl-D-alanine + UMP. Its pathway is cell wall biogenesis; peptidoglycan biosynthesis. Functionally, catalyzes the initial step of the lipid cycle reactions in the biosynthesis of the cell wall peptidoglycan: transfers peptidoglycan precursor phospho-MurNAc-pentapeptide from UDP-MurNAc-pentapeptide onto the lipid carrier undecaprenyl phosphate, yielding undecaprenyl-pyrophosphoryl-MurNAc-pentapeptide, known as lipid I. The protein is Phospho-N-acetylmuramoyl-pentapeptide-transferase of Xanthomonas axonopodis pv. citri (strain 306).